We begin with the raw amino-acid sequence, 286 residues long: Alpha-ketoglutarate-dependent dioxygenase alkB homolog 3 (286 aa).

Residues M1–P38 form a disordered region. Residues S20–Q36 are compositionally biased toward polar residues. Substrate is bound by residues W115 and Y141–Y143. Residues S172–Y278 form the Fe2OG dioxygenase domain. The residue at position 177 (L177) is a (4R)-5-hydroxyleucine; alternate. L177 carries the post-translational modification (4R)-5-oxoleucine; alternate. N179 to Y181 provides a ligand contact to 2-oxoglutarate. Fe cation-binding residues include H191 and D193. A substrate-binding site is contributed by D194. Position 257 (H257) interacts with Fe cation. 2-oxoglutarate contacts are provided by residues R269–R275 and R275.

This sequence belongs to the alkB family. Interacts with the ASCC complex composed of ASCC1, ASCC2 and ASCC3. Interacts directly with ASCC3, and is thereby recruited to the ASCC complex. Interacts with OTUD4; the interaction is direct. Interacts with USP7 and USP9X. Fe(2+) is required as a cofactor. Ubiquitinated; undergoes 'Lys-48'-linked polyubiquitination. OTUD4 promotes USP7 and USP9X-dependent deubiquitination of 'Lys-48'-polyubiquitinated ALKBH3 promoting the repair of alkylated DNA lesions.

The protein localises to the nucleus. The protein resides in the cytoplasm. It catalyses the reaction an N(1)-methyladenosine in mRNA + 2-oxoglutarate + O2 = an adenosine in mRNA + formaldehyde + succinate + CO2. The enzyme catalyses a methylated nucleobase within DNA + 2-oxoglutarate + O2 = a nucleobase within DNA + formaldehyde + succinate + CO2. It carries out the reaction an N(1)-methyl-2'-deoxyadenosine in single-stranded DNA + 2-oxoglutarate + O2 = a 2'-deoxyadenosine in single-stranded DNA + formaldehyde + succinate + CO2 + H(+). The catalysed reaction is an N(3)-methyl-2'-deoxycytidine in single-stranded DNA + 2-oxoglutarate + O2 = a 2'-deoxycytidine in single-stranded DNA + formaldehyde + succinate + CO2 + H(+). It catalyses the reaction a 3,N(4)-etheno-2'-deoxycytidine in single-stranded DNA + 2-oxoglutarate + O2 + H2O = a 2'-deoxycytidine in single-stranded DNA + glyoxal + succinate + CO2. Its activity is regulated as follows. Activated by ascorbate. In terms of biological role, dioxygenase that mediates demethylation of DNA and RNA containing 1-methyladenosine (m1A). Repairs alkylated DNA containing 1-methyladenosine (m1A) and 3-methylcytosine (m3C) by oxidative demethylation. Has a strong preference for single-stranded DNA. Able to process alkylated m3C within double-stranded regions via its interaction with ASCC3, which promotes DNA unwinding to generate single-stranded substrate needed for ALKBH3. Can repair exocyclic 3,N4-ethenocytosine adducs in single-stranded DNA. Also acts on RNA. Demethylates N(1)-methyladenosine (m1A) RNA, an epigenetic internal modification of messenger RNAs (mRNAs) highly enriched within 5'-untranslated regions (UTRs) and in the vicinity of start codons. Requires molecular oxygen, alpha-ketoglutarate and iron. In Bos taurus (Bovine), this protein is Alpha-ketoglutarate-dependent dioxygenase alkB homolog 3.